A 492-amino-acid polypeptide reads, in one-letter code: Endoglucanase 15 (492 aa).

The first 30 residues, 1–30, serve as a signal peptide directing secretion; the sequence is MSCISSQCFITIKSICIVLLLSITCGAVSA. The active-site Nucleophile is Asp86. Residues His414, Asp466, and Glu475 contribute to the active site.

Belongs to the glycosyl hydrolase 9 (cellulase E) family.

The protein resides in the secreted. It catalyses the reaction Endohydrolysis of (1-&gt;4)-beta-D-glucosidic linkages in cellulose, lichenin and cereal beta-D-glucans.. This chain is Endoglucanase 15, found in Arabidopsis thaliana (Mouse-ear cress).